The primary structure comprises 504 residues: Cytochrome P450 monooxygenase gsfF (504 aa).

A signal peptide spans M1–G16. N-linked (GlcNAc...) asparagine glycosylation is found at N97 and N150. C450 contributes to the heme binding site.

This sequence belongs to the cytochrome P450 family. Heme is required as a cofactor.

The catalysed reaction is griseophenone B + reduced [NADPH--hemoprotein reductase] + O2 + H(+) = desmethyl-dehydrogriseofulvin + oxidized [NADPH--hemoprotein reductase] + 2 H2O. Its pathway is secondary metabolite biosynthesis; terpenoid biosynthesis. Its function is as follows. Cytochrome P450 monooxygenase; part of the gene cluster that mediates the biosynthesis of griseofulvin, an important antifungal drug that has been in use for a long time for treating dermatophyte infections. The first step of the pathway is the formation of the heptaketide backbone by gsfA which is initiated by priming with acetyl-CoA, followed by sequential condensations of 6 malonyl-CoA units. The resulting benzophenone can undergo a spontaneous dehydration to form norlichexanthone. However, the true precursor for the griseofulvin biosynthesis is not norlichexanthone, but the heptaketide benzophenone that is O-methylated at 3-OH by gsfB to produce griseophenone D which is further methylated at 9-OH by gsfC to yield griseophenone C. Griseophenone C is then substrate of halogenase gsfI which is responsible for the regio-specific chlorination at the C13 position to form griseophenone B. The cytochrome P450 gsfF catalyzes the coupling of orcinol and phloroglucinol rings in griseophenone B to form desmethyl-dehydrogriseofulvin A which is further methylated at 5-OH by gsfD to yield dehydrogriseofulvin. Finally, gsfE performs stereospecific reduction of enone 18 of dehydrogriseofulvin to afford the final product griseofulvin. In Penicillium aethiopicum, this protein is Cytochrome P450 monooxygenase gsfF.